A 349-amino-acid polypeptide reads, in one-letter code: Glycerol-3-phosphate dehydrogenase [NAD(+)], cytoplasmic (349 aa).

NAD(+) contacts are provided by residues 10–15, Lys-120, and Ala-153; that span reads GSGDWG. Substrate is bound at residue Lys-120. Ser-154 is subject to Phosphoserine. Catalysis depends on Lys-204, which acts as the Proton acceptor. Arg-269 lines the NAD(+) pocket. 269 to 270 lines the substrate pocket; it reads RN. Lys-289 is subject to N6-succinyllysine. Residues Lys-296 and Gln-298 each contribute to the NAD(+) site. Position 326 is a phosphotyrosine (Tyr-326).

This sequence belongs to the NAD-dependent glycerol-3-phosphate dehydrogenase family. Homodimer.

The protein resides in the cytoplasm. It carries out the reaction sn-glycerol 3-phosphate + NAD(+) = dihydroxyacetone phosphate + NADH + H(+). In terms of biological role, has glycerol-3-phosphate dehydrogenase activity. The polypeptide is Glycerol-3-phosphate dehydrogenase [NAD(+)], cytoplasmic (GPD1) (Oryctolagus cuniculus (Rabbit)).